Here is a 501-residue protein sequence, read N- to C-terminus: E3 ubiquitin-protein ligase TRIM35 (501 aa).

Met1 bears the N-acetylmethionine mark. At Ser8 the chain carries Phosphoserine. The RING-type zinc-finger motif lies at 21-61; that stretch reads CAVCYDPFRDAVTLRCGHNFCRRCVSGCWEVQTTPSCPVCK. The segment at 96-137 adopts a B box-type zinc-finger fold; that stretch reads RSPRPCRAHRAPLTLFCLEDKELLCCACQADARHQEHRVQPI. Cys101, His104, Cys123, and His129 together coordinate Zn(2+). Residues 200–252 adopt a coiled-coil conformation; sequence VEEQATLDAMKEESRKKHLQAEEKMKQLAEQTEALAREIERLQMEMKEDDMTF. Residues 284-495 form the B30.2/SPRY domain; it reads LESLQYRVWK…LRICHLRVSI (212 aa).

This sequence belongs to the TRIM/RBCC family. As to quaternary structure, interacts with PKM isoform M2, but not isoform M1; this interaction may compete with that between PKM and FGFR1, and hence reduces FGFR1-dependent tyrosine phosphorylation of PKM. Interacts with IRF7; this interaction promotes IRF7 proteasomal degradation. Interacts with TRAF3; this interaction promotes TRAF3 activation. Widely expressed. Highly expressed in brain, heart, kidney, spleen, skeletal muscle, lung and thymus. Lower expression found in stomach, large intestine and bone marrow.

Its subcellular location is the cytoplasm. It localises to the nucleus. The enzyme catalyses S-ubiquitinyl-[E2 ubiquitin-conjugating enzyme]-L-cysteine + [acceptor protein]-L-lysine = [E2 ubiquitin-conjugating enzyme]-L-cysteine + N(6)-ubiquitinyl-[acceptor protein]-L-lysine.. It participates in protein modification; protein ubiquitination. Functionally, E3 ubiquitin-protein ligase that participates in multiple biological processes including cell death, glucose metabolism, and in particular, the innate immune response. Mediates 'Lys-63'-linked polyubiquitination of TRAF3 thereby promoting type I interferon production via RIG-I signaling pathway. Can also catalyze 'Lys-48'-linked polyubiquitination and proteasomal degradation of viral proteins such as influenza virus PB2. Acts as a negative feedback regulator of TLR7- and TLR9-triggered signaling. Mechanistically, promotes the 'Lys-48'-linked ubiquitination of IRF7 and induces its degradation via a proteasome-dependent pathway. Reduces FGFR1-dependent tyrosine phosphorylation of PKM, inhibiting PKM-dependent lactate production, glucose metabolism, and cell growth. The sequence is that of E3 ubiquitin-protein ligase TRIM35 (Trim35) from Mus musculus (Mouse).